The primary structure comprises 157 residues: Transcription elongation factor GreA (157 aa).

It belongs to the GreA/GreB family.

Functionally, necessary for efficient RNA polymerase transcription elongation past template-encoded arresting sites. The arresting sites in DNA have the property of trapping a certain fraction of elongating RNA polymerases that pass through, resulting in locked ternary complexes. Cleavage of the nascent transcript by cleavage factors such as GreA or GreB allows the resumption of elongation from the new 3'terminus. GreA releases sequences of 2 to 3 nucleotides. The sequence is that of Transcription elongation factor GreA from Bartonella tribocorum (strain CIP 105476 / IBS 506).